A 203-amino-acid chain; its full sequence is Probable chemoreceptor glutamine deamidase CheD (203 aa).

Belongs to the CheD family.

It carries out the reaction L-glutaminyl-[protein] + H2O = L-glutamyl-[protein] + NH4(+). Its function is as follows. Probably deamidates glutamine residues to glutamate on methyl-accepting chemotaxis receptors (MCPs), playing an important role in chemotaxis. The polypeptide is Probable chemoreceptor glutamine deamidase CheD (Herminiimonas arsenicoxydans).